Reading from the N-terminus, the 161-residue chain is MGCCYSSENEDSDQDREERKLLLDPSSPPTKALNGAEPNYHSLPSARTDEQALLSSILAKTASNIIDVSAADSQGMEQHEYMDRARQYSTRLAVLSSSLTHWKKLPPLPSLTSQPHQVLASEPIPFSDLQQVSRIAAYAYSALSQIRVDAKEELVVQFGIP.

Residues 1-43 (MGCCYSSENEDSDQDREERKLLLDPSSPPTKALNGAEPNYHSL) form a disordered region. Residue Gly-2 is the site of N-myristoyl glycine attachment. Residues Cys-3 and Cys-4 are each lipidated (S-palmitoyl cysteine). Lys-20 participates in a covalent cross-link: Glycyl lysine isopeptide (Lys-Gly) (interchain with G-Cter in ubiquitin). Residue Ser-27 is modified to Phosphoserine. Lys-31 participates in a covalent cross-link: Glycyl lysine isopeptide (Lys-Gly) (interchain with G-Cter in ubiquitin). 2 positions are modified to phosphoserine: Ser-42 and Ser-56. Residue Lys-60 forms a Glycyl lysine isopeptide (Lys-Gly) (interchain with G-Cter in ubiquitin) linkage. Ser-98 carries the phosphoserine modification. Residues Lys-103 and Lys-104 each participate in a glycyl lysine isopeptide (Lys-Gly) (interchain with G-Cter in ubiquitin) cross-link. Residues 121-161 (SEPIPFSDLQQVSRIAAYAYSALSQIRVDAKEELVVQFGIP) are interaction with LAMTOR2 and LAMTOR3. Ser-141 is modified (phosphoserine).

It belongs to the LAMTOR1 family. As to quaternary structure, part of the Ragulator complex composed of LAMTOR1, LAMTOR2, LAMTOR3, LAMTOR4 and LAMTOR5. LAMTOR4 and LAMTOR5 form a heterodimer that interacts, through LAMTOR1, with a LAMTOR2, LAMTOR3 heterodimer. Interacts with LAMTOR2 and LAMTOR3; the interaction is direct. The Ragulator complex interacts with both the mTORC1 complex and heterodimers constituted of the Rag GTPases RagA/RRAGA, RagB/RRAGB, RagC/RRAGC and RagD/RRAGD; regulated by amino acid availability. The Ragulator complex interacts with SLC38A9; the probable amino acid sensor. Component of the lysosomal folliculin complex (LFC), composed of FLCN, FNIP1 (or FNIP2), RagA/RRAGA or RagB/RRAGB GDP-bound, RagC/RRAGC or RagD/RRAGD GTP-bound, and Ragulator. Associates with the lysosomal V-ATPase complex; interaction promotes the guanine nucleotide exchange factor (GEF) of the Ragulator complex. Interacts with MMP14. Interacts with CDKN1B; prevents the interaction of CDKN1B with RHOA leaving RHOA in a form accessible to activation by ARHGEF2. Interacts with PIP4P1. In terms of processing, N-terminal myristoylation and palmitoylation mediates its recruitment to lysosome membranes, thereby promoting localization of the Ragulator complex to lysosomes. N-myristoylation by NMT1 is required for palmitoylation at Cys-3 and Cys-4. May be palmitoylated by ZDHHC3. Post-translationally, ubiquitinated at Lys-60, Lys-103 and Lys-104 by UBE3A, promoting its degradation by the proteasome. Ubiquitination at Lys-20 impairs the association with the lysosomal V-ATPase complex. Deubiquitination at Lys-20 by USP32 promotes the association with the lysosomal V-ATPase complex and subsequent activation of the mTORC1 complex.

The protein localises to the lysosome membrane. It localises to the late endosome membrane. In terms of biological role, key component of the Ragulator complex, a multiprotein complex involved in amino acid sensing and activation of mTORC1, a signaling complex promoting cell growth in response to growth factors, energy levels, and amino acids. Activated by amino acids through a mechanism involving the lysosomal V-ATPase, the Ragulator plays a dual role for the small GTPases Rag (RagA/RRAGA, RagB/RRAGB, RagC/RRAGC and/or RagD/RRAGD): it (1) acts as a guanine nucleotide exchange factor (GEF), activating the small GTPases Rag and (2) mediates recruitment of Rag GTPases to the lysosome membrane. Activated Ragulator and Rag GTPases function as a scaffold recruiting mTORC1 to lysosomes where it is in turn activated. LAMTOR1 is directly responsible for anchoring the Ragulator complex to the lysosomal membrane. LAMTOR1 wraps around the other subunits of the Ragulator complex to hold them in place and interacts with the Rag GTPases, thereby playing a key role in the recruitment of the mTORC1 complex to lysosomes. Also involved in the control of embryonic stem cells differentiation via non-canonical RagC/RRAGC and RagD/RRAGD activation: together with FLCN, it is necessary to recruit and activate RagC/RRAGC and RagD/RRAGD at the lysosomes, and to induce exit of embryonic stem cells from pluripotency via non-canonical, mTOR-independent TFE3 inactivation. Also required for late endosomes/lysosomes biogenesis it may regulate both the recycling of receptors through endosomes and the MAPK signaling pathway through recruitment of some of its components to late endosomes. May be involved in cholesterol homeostasis regulating LDL uptake and cholesterol release from late endosomes/lysosomes. May also play a role in RHOA activation. This Homo sapiens (Human) protein is Ragulator complex protein LAMTOR1.